A 143-amino-acid polypeptide reads, in one-letter code: Ribosomal RNA large subunit methyltransferase H (143 aa).

Residues G95 and 111-116 (FSDLTF) each bind S-adenosyl-L-methionine.

This sequence belongs to the RNA methyltransferase RlmH family. In terms of assembly, homodimer.

It is found in the cytoplasm. The enzyme catalyses pseudouridine(1915) in 23S rRNA + S-adenosyl-L-methionine = N(3)-methylpseudouridine(1915) in 23S rRNA + S-adenosyl-L-homocysteine + H(+). Functionally, specifically methylates the pseudouridine at position 1915 (m3Psi1915) in 23S rRNA. The sequence is that of Ribosomal RNA large subunit methyltransferase H from Metamycoplasma arthritidis (strain 158L3-1) (Mycoplasma arthritidis).